The sequence spans 132 residues: Small ribosomal subunit protein uS8 (132 aa).

This sequence belongs to the universal ribosomal protein uS8 family. In terms of assembly, part of the 30S ribosomal subunit. Contacts proteins S5 and S12.

Functionally, one of the primary rRNA binding proteins, it binds directly to 16S rRNA central domain where it helps coordinate assembly of the platform of the 30S subunit. In Streptococcus sanguinis (strain SK36), this protein is Small ribosomal subunit protein uS8.